The primary structure comprises 525 residues: Phosphoenolpyruvate carboxykinase (ATP) (525 aa).

3 residues coordinate substrate: R52, Y186, and K192. Residues K192, H211, and G228–T236 contribute to the ATP site. Mn(2+) contacts are provided by K192 and H211. Position 249 (D249) interacts with Mn(2+). Residues E277, R314, R433–I434, and T439 each bind ATP. R314 contacts substrate.

It belongs to the phosphoenolpyruvate carboxykinase (ATP) family. The cofactor is Mn(2+).

It localises to the cytoplasm. It carries out the reaction oxaloacetate + ATP = phosphoenolpyruvate + ADP + CO2. It participates in carbohydrate biosynthesis; gluconeogenesis. Functionally, involved in the gluconeogenesis. Catalyzes the conversion of oxaloacetate (OAA) to phosphoenolpyruvate (PEP) through direct phosphoryl transfer between the nucleoside triphosphate and OAA. The sequence is that of Phosphoenolpyruvate carboxykinase (ATP) from Fusobacterium nucleatum subsp. nucleatum (strain ATCC 25586 / DSM 15643 / BCRC 10681 / CIP 101130 / JCM 8532 / KCTC 2640 / LMG 13131 / VPI 4355).